A 429-amino-acid polypeptide reads, in one-letter code: N5-carboxyaminoimidazole ribonucleotide synthase (429 aa).

Residues lysine 117, lysine 157, 194–197 (EERV), glutamate 202, and 280–281 (NE) contribute to the ATP site. Residues 121–310 (RQRLAAAGVA…QFEQHLRAVL (190 aa)) enclose the ATP-grasp domain. Residues 406-429 (RASDDAVGVPPACGGRSDEEERRL) form a disordered region.

The protein belongs to the PurK/PurT family. As to quaternary structure, homodimer.

The enzyme catalyses 5-amino-1-(5-phospho-beta-D-ribosyl)imidazole + hydrogencarbonate + ATP = 5-carboxyamino-1-(5-phospho-D-ribosyl)imidazole + ADP + phosphate + 2 H(+). Its pathway is purine metabolism; IMP biosynthesis via de novo pathway; 5-amino-1-(5-phospho-D-ribosyl)imidazole-4-carboxylate from 5-amino-1-(5-phospho-D-ribosyl)imidazole (N5-CAIR route): step 1/2. Functionally, catalyzes the ATP-dependent conversion of 5-aminoimidazole ribonucleotide (AIR) and HCO(3)(-) to N5-carboxyaminoimidazole ribonucleotide (N5-CAIR). The protein is N5-carboxyaminoimidazole ribonucleotide synthase of Mycobacterium bovis (strain ATCC BAA-935 / AF2122/97).